The sequence spans 92 residues: Small ribosomal subunit protein uS19c (92 aa).

Belongs to the universal ribosomal protein uS19 family.

It is found in the plastid. Its subcellular location is the chloroplast. Functionally, protein S19 forms a complex with S13 that binds strongly to the 16S ribosomal RNA. The protein is Small ribosomal subunit protein uS19c of Tupiella akineta (Green alga).